Here is a 354-residue protein sequence, read N- to C-terminus: Hyaluronan and proteoglycan link protein 1 (354 aa).

Residues 1-9 constitute a propeptide that is removed on maturation; that stretch reads MRSLLFLVL. One can recognise an Ig-like V-type domain in the interval 38–152; it reads PRLLVEAEQA…EGLEDDTAVV (115 aa). The N-linked (GlcNAc...) asparagine glycan is linked to Asn56. Disulfide bonds link Cys61-Cys139, Cys181-Cys252, Cys205-Cys226, Cys279-Cys349, and Cys304-Cys325. Link domains lie at 159 to 254 and 259 to 351; these read VVFP…FCFT and GRFY…YCFR.

Belongs to the HAPLN family.

The protein localises to the secreted. It localises to the extracellular space. It is found in the extracellular matrix. Stabilizes the aggregates of proteoglycan monomers with hyaluronic acid in the extracellular cartilage matrix. The protein is Hyaluronan and proteoglycan link protein 1 (Hapln1) of Rattus norvegicus (Rat).